Consider the following 358-residue polypeptide: Chorismate synthase (358 aa).

R46 serves as a coordination point for NADP(+). FMN-binding positions include 123-125 (RSS), 235-236 (NA), G275, 290-294 (KPTPS), and R316.

Belongs to the chorismate synthase family. In terms of assembly, homotetramer. It depends on FMNH2 as a cofactor.

It catalyses the reaction 5-O-(1-carboxyvinyl)-3-phosphoshikimate = chorismate + phosphate. It participates in metabolic intermediate biosynthesis; chorismate biosynthesis; chorismate from D-erythrose 4-phosphate and phosphoenolpyruvate: step 7/7. In terms of biological role, catalyzes the anti-1,4-elimination of the C-3 phosphate and the C-6 proR hydrogen from 5-enolpyruvylshikimate-3-phosphate (EPSP) to yield chorismate, which is the branch point compound that serves as the starting substrate for the three terminal pathways of aromatic amino acid biosynthesis. This reaction introduces a second double bond into the aromatic ring system. This Sulfurimonas denitrificans (strain ATCC 33889 / DSM 1251) (Thiomicrospira denitrificans (strain ATCC 33889 / DSM 1251)) protein is Chorismate synthase.